We begin with the raw amino-acid sequence, 324 residues long: Lipoyl synthase, chloroplastic (324 aa).

Composition is skewed to low complexity over residues 1–12 (MCGPTATTVANA) and 20–29 (KGLPPGLKKP). The interval 1-30 (MCGPTATTVANAGTGGETIKGLPPGLKKPP) is disordered. [4Fe-4S] cluster is bound by residues Cys58, Cys63, Cys69, Cys86, Cys90, Cys93, and Ser302. The 220-residue stretch at 72 to 291 (GDTGTATVML…AYGEEVIGFR (220 aa)) folds into the Radical SAM core domain.

It belongs to the radical SAM superfamily. Lipoyl synthase family. The cofactor is [4Fe-4S] cluster.

Its subcellular location is the plastid. It is found in the chloroplast. The enzyme catalyses [[Fe-S] cluster scaffold protein carrying a second [4Fe-4S](2+) cluster] + N(6)-octanoyl-L-lysyl-[protein] + 2 oxidized [2Fe-2S]-[ferredoxin] + 2 S-adenosyl-L-methionine + 4 H(+) = [[Fe-S] cluster scaffold protein] + N(6)-[(R)-dihydrolipoyl]-L-lysyl-[protein] + 4 Fe(3+) + 2 hydrogen sulfide + 2 5'-deoxyadenosine + 2 L-methionine + 2 reduced [2Fe-2S]-[ferredoxin]. It functions in the pathway protein modification; protein lipoylation via endogenous pathway; protein N(6)-(lipoyl)lysine from octanoyl-[acyl-carrier-protein]: step 2/2. Its function is as follows. Catalyzes the radical-mediated insertion of two sulfur atoms into the C-6 and C-8 positions of the octanoyl moiety bound to the lipoyl domains of lipoate-dependent enzymes, thereby converting the octanoylated domains into lipoylated derivatives. This Ostreococcus lucimarinus (strain CCE9901) protein is Lipoyl synthase, chloroplastic.